A 200-amino-acid polypeptide reads, in one-letter code: Small ribosomal subunit protein uS2 (200 aa).

This sequence belongs to the universal ribosomal protein uS2 family.

This is Small ribosomal subunit protein uS2 from Picrophilus torridus (strain ATCC 700027 / DSM 9790 / JCM 10055 / NBRC 100828 / KAW 2/3).